The chain runs to 579 residues: MTMLWSDEDKTMVAAVLGTKAFDYLMSSLVSAECSLMAMGSDENLQNMLSDLVERPNASNFSWNYAIFWQISRSKLGELVLGWGDGCCREAREGEESELTRILNIRLADEAQQRMRKRVLQKLHMFFGGTDEDNYVSGLDKVTDTEMFFLASMYFSFPRGQGGPGKCFTAGKHVWLSDVMRSSVDYCSRSFLMKSAGMQTVVLIPTDIGVMELGSVRTIPESLELVHSIKSCFSSFLAQVRAKQAAPLAAVVAEKKNGNNSVFPSSFPFDQSKENPKIFGQNLESGSTEFREKLALRKPVDGPLEMYRNGNRAPIINTQNGVRPVSWASFGNVKPGNSVDLYSPQAPPNNLREFVNGGREELRLNSLQHQKPGGMQIDFTNSRPVVSPVPTVESEHSDVEVSCKEKHAGPADERRPRKRGRKPANGREEPLNHVEAERQRREKLNQRFYALRAVVPNISKMDKASLLGDAIAHITDMQKRIRDAEYKLEKRGSTSVDAADINIEAASDEVIVRARCPLGTHPVAKVVEAFKETQVSVVESKLAVGNDTVYHTFVVKSSGPEQLTKEKLMAAFAGESNSL.

The interval 373 to 439 is disordered; that stretch reads GGMQIDFTNS…PLNHVEAERQ (67 aa). The span at 382–392 shows a compositional bias: low complexity; that stretch reads SRPVVSPVPTV. Basic and acidic residues-rich tracts occupy residues 393–415 and 425–439; these read ESEH…DERR and NGRE…AERQ. The basic motif; degenerate stretch occupies residues 428–441; it reads EEPLNHVEAERQRR. In terms of domain architecture, bHLH spans 428-477; sequence EEPLNHVEAERQRREKLNQRFYALRAVVPNISKMDKASLLGDAIAHITDM. A helix-loop-helix motif region spans residues 442 to 477; it reads EKLNQRFYALRAVVPNISKMDKASLLGDAIAHITDM.

It is found in the nucleus. Functionally, transcription factor that negatively regulates jasmonate (JA) signaling. Negatively regulates JA-dependent response to wounding, JA-induced expression of defense genes, JA-dependent responses against herbivorous insects, and JA-dependent resistance against Botrytis cinerea infection. Plays a positive role in resistance against the bacterial pathogen Pseudomonas syringae pv tomato DC3000. In Solanum lycopersicum (Tomato), this protein is Transcription factor MTB2.